The primary structure comprises 127 residues: MISLTALDLLDELLNDSSSNMIWLYEVYMLYKTYTSYFFMSSKSFVRGVKRYLIYFCYCANFIALFRVIFGTIFVYSPDGITPFMTDFVRWILIYLKGSINSLLYMASFTKQISLLRGWRTEHAELS.

3 helical membrane passes run 20–42 (NMIW…FMSS), 54–76 (IYFC…IFVY), and 91–110 (WILI…ASFT).

It is found in the membrane. The protein resides in the cytoplasm. This is an uncharacterized protein from Schizosaccharomyces pombe (strain 972 / ATCC 24843) (Fission yeast).